A 72-amino-acid chain; its full sequence is Translation initiation factor IF-1 (72 aa).

The S1-like domain maps to 1–72 (MAKEDNIEMQ…SKGRIVFRSR (72 aa)).

It belongs to the IF-1 family. As to quaternary structure, component of the 30S ribosomal translation pre-initiation complex which assembles on the 30S ribosome in the order IF-2 and IF-3, IF-1 and N-formylmethionyl-tRNA(fMet); mRNA recruitment can occur at any time during PIC assembly.

The protein resides in the cytoplasm. Functionally, one of the essential components for the initiation of protein synthesis. Stabilizes the binding of IF-2 and IF-3 on the 30S subunit to which N-formylmethionyl-tRNA(fMet) subsequently binds. Helps modulate mRNA selection, yielding the 30S pre-initiation complex (PIC). Upon addition of the 50S ribosomal subunit IF-1, IF-2 and IF-3 are released leaving the mature 70S translation initiation complex. This Shewanella loihica (strain ATCC BAA-1088 / PV-4) protein is Translation initiation factor IF-1.